A 364-amino-acid chain; its full sequence is MSTHRNQRVIVGISGGVDSSVSAYLLKALGYEVEGLFMKNWDEDDGTEYCTALSDLEDAQKVCDKLGIKLHTASFSAEYWDRVFEHFLDEYRAGRTPNPDILCNKEIKFKAFLDYAQALGGDLIATGHYAQFSRFGEHTYLMKGADPSKEQSYFLHAVPGQALARTLFPVGGLLKKEVRRIARELDLITHDKKDSTGICFIGERKFSDFLKTYLPAQPGKIVTDKGEEIGRHQGLMYHTIGQRQGLGIGGLKGYDDAPWYVVEKDLDNNELVVAQGGDHPRLFSAGLTASKLDWINGVPAKSSFSCYAKTRYRQPDQLCRVDVQDGGVRVTFDKRQRAVTPGQSVVFYDGARCLGGGVIESVFK.

Residues 12 to 19 (GISGGVDS) and Met-38 contribute to the ATP site. The tract at residues 98–100 (NPD) is interaction with target base in tRNA. The Nucleophile role is filled by Cys-103. The cysteines at positions 103 and 199 are disulfide-linked. An ATP-binding site is contributed by Gly-127. An interaction with tRNA region spans residues 149 to 151 (KEQ). The active-site Cysteine persulfide intermediate is Cys-199. Positions 311–312 (RY) are interaction with tRNA.

Belongs to the MnmA/TRMU family.

The protein resides in the cytoplasm. It carries out the reaction S-sulfanyl-L-cysteinyl-[protein] + uridine(34) in tRNA + AH2 + ATP = 2-thiouridine(34) in tRNA + L-cysteinyl-[protein] + A + AMP + diphosphate + H(+). Catalyzes the 2-thiolation of uridine at the wobble position (U34) of tRNA, leading to the formation of s(2)U34. This is tRNA-specific 2-thiouridylase MnmA from Hahella chejuensis (strain KCTC 2396).